Consider the following 180-residue polypeptide: Regulator of G-protein signaling 8 (180 aa).

S26 is modified (phosphoserine). Residues 56-171 form the RGS domain; that stretch reads SFDVLLSHKY…FLRSKMYLDL (116 aa).

Interacts with GNAO1. Interacts with GNAI3.

It is found in the cell membrane. Its subcellular location is the membrane. It localises to the perikaryon. The protein localises to the cell projection. The protein resides in the dendrite. It is found in the nucleus. Its function is as follows. Regulates G protein-coupled receptor signaling cascades, including signaling via muscarinic acetylcholine receptor CHRM2 and dopamine receptor DRD2. Inhibits signal transduction by increasing the GTPase activity of G protein alpha subunits, thereby driving them into their inactive GDP-bound form. Modulates the activity of potassium channels that are activated in response to DRD2 and CHRM2 signaling. This is Regulator of G-protein signaling 8 (RGS8) from Homo sapiens (Human).